Consider the following 1076-residue polypeptide: JmjC domain-containing histone demethylation protein 1 (1076 aa).

The region spanning 93–265 is the JmjC domain; the sequence is FSQTPLEDLV…TQLRVYQVEN (173 aa). A substrate-binding site is contributed by Thr-159. Positions 162 and 164 each coordinate Fe cation. Residue Lys-179 participates in substrate binding. His-233 is a Fe cation binding site. Disordered regions lie at residues 598 to 748 and 789 to 1056; these read FEEE…DPVV and KIEP…KIPS. Positions 610–634 are enriched in acidic residues; the sequence is DQEEEEYDAEEPEDQEEEEEDEYQA. Basic and acidic residues predominate over residues 653 to 680; it reads AKNDESEEVSVKKDKKEKMEKVEKDEKR. The segment covering 681-698 has biased composition (basic residues); the sequence is RNSKSKKDKISKEKKKKE. 2 stretches are compositionally biased toward basic and acidic residues: residues 699 to 714 and 789 to 811; these read RERIELESQLDAELRA and KIEPKRGSEEGSQSREQSMEPEH. Residues 935-946 are compositionally biased toward low complexity; the sequence is ASAPSSRHSSIS. Polar residues-rich tracts occupy residues 957 to 990 and 1004 to 1019; these read FNSSRNSSIDTPYTPTTVTPSRSSWLPNTSSINR and DSLSPINIASSPTYPT. Basic and acidic residues predominate over residues 1044-1056; the sequence is QHHDDGHKHKIPS.

Belongs to the JHDM1 histone demethylase family. Fe(2+) serves as cofactor.

Its subcellular location is the nucleus. It carries out the reaction N(6),N(6)-dimethyl-L-lysyl(36)-[histone H3] + 2 2-oxoglutarate + 2 O2 = L-lysyl(36)-[histone H3] + 2 formaldehyde + 2 succinate + 2 CO2. Its function is as follows. Histone demethylase that specifically demethylates 'Lys-36' of histone H3, thereby playing a central role in histone code. Has a role in regulating lifespan. The chain is JmjC domain-containing histone demethylation protein 1 (jhdm-1) from Caenorhabditis elegans.